We begin with the raw amino-acid sequence, 199 residues long: Type-4 uracil-DNA glycosylase (199 aa).

[4Fe-4S] cluster-binding residues include Cys-14 and Cys-17. Uracil is bound by residues 41 to 43 (GEA), Phe-55, and Asn-81. The interval 77-114 (VYITNVLKCRPPNNRDPTPEEVEKCGDYLVRQLEAIRP) is pseudo-FCL. 2 residues coordinate [4Fe-4S] cluster: Cys-85 and Cys-101. Residue His-163 coordinates uracil.

This sequence belongs to the uracil-DNA glycosylase (UDG) superfamily. Type 4 (UDGa) family.

The enzyme catalyses Hydrolyzes single-stranded DNA or mismatched double-stranded DNA and polynucleotides, releasing free uracil.. With respect to regulation, product-inhibited by both uracil and apurinic/apyrimidinic sites. Removes uracil bases that are present in DNA as a result of either deamination of cytosine or misincorporation of dUMP instead of dTMP. Can remove uracil from double-stranded DNA containing either a U/G or U/A base pair as well as from single-stranded DNA. The chain is Type-4 uracil-DNA glycosylase from Archaeoglobus fulgidus (strain ATCC 49558 / DSM 4304 / JCM 9628 / NBRC 100126 / VC-16).